A 387-amino-acid chain; its full sequence is MKQAVIVDCIRTPMGRSKAGVFRNVRAETLSAELMKGLLLRNPQLDPNAIEDVIWGCVQQTLEQGFNIARNASLLAGIPKTAGAVTVNRLCGSSMEAIHQAARAIMTGMGDTFIIGGVEHMGHVPMNHGVDFHPGLANNVAKASGMMGLTAEMLGKLHGISREQQDAFAVRSHQRAHAATVEGRFAKEIYAIEGHDANGALIKVLHDEVIRPETSMESLAALRPVFDPANGTVTAGTSSALSDGASAMLVMEESKARALGLPIRARIRSMAVAGCDAAIMGYGPVPATQKALARAGITVNDLDVIELNEAFAAQSLPCVKDLGLLDVVDEKINLNGGAIALGHPLGCSGARISTTLINLMEHKDATLGLATMCIGLGQGIATVFERV.

The Acyl-thioester intermediate role is filled by Cys-91. Catalysis depends on proton acceptor residues His-343 and Cys-373.

It belongs to the thiolase-like superfamily. Thiolase family. In terms of assembly, heterotetramer of two alpha chains (FadB) and two beta chains (FadA).

The protein localises to the cytoplasm. It carries out the reaction an acyl-CoA + acetyl-CoA = a 3-oxoacyl-CoA + CoA. The protein operates within lipid metabolism; fatty acid beta-oxidation. Its function is as follows. Catalyzes the final step of fatty acid oxidation in which acetyl-CoA is released and the CoA ester of a fatty acid two carbons shorter is formed. The chain is 3-ketoacyl-CoA thiolase from Shewanella sp. (strain MR-7).